A 602-amino-acid polypeptide reads, in one-letter code: Elongation factor 4 (602 aa).

The tr-type G domain occupies 7-189 (KFIRNFSIIA…QLVVAIPPPV (183 aa)). Residues 19 to 24 (DHGKST) and 136 to 139 (NKID) each bind GTP.

Belongs to the TRAFAC class translation factor GTPase superfamily. Classic translation factor GTPase family. LepA subfamily.

The protein localises to the cell inner membrane. It carries out the reaction GTP + H2O = GDP + phosphate + H(+). Its function is as follows. Required for accurate and efficient protein synthesis under certain stress conditions. May act as a fidelity factor of the translation reaction, by catalyzing a one-codon backward translocation of tRNAs on improperly translocated ribosomes. Back-translocation proceeds from a post-translocation (POST) complex to a pre-translocation (PRE) complex, thus giving elongation factor G a second chance to translocate the tRNAs correctly. Binds to ribosomes in a GTP-dependent manner. This Coxiella burnetii (strain Dugway 5J108-111) protein is Elongation factor 4.